Here is an 81-residue protein sequence, read N- to C-terminus: uncharacterized protein (81 aa).

Positions 1–22 are cleaved as a signal peptide; that stretch reads MNKKLSIIFLIFALIASVLCSA. The segment at 29–81 is disordered; the sequence is HSSSTTTTTSSSGGTSGTDSSINTGSSYSGSGSGSGSTGGSGSGSGSGTAKWK. Residues 30 to 58 are compositionally biased toward low complexity; the sequence is SSSTTTTTSSSGGTSGTDSSINTGSSYSG. The segment covering 59–75 has biased composition (gly residues); sequence SGSGSGSTGGSGSGSGS.

The protein resides in the secreted. This is an uncharacterized protein from Dictyostelium discoideum (Social amoeba).